We begin with the raw amino-acid sequence, 184 residues long: UPF0397 protein SAR2767 (184 aa).

5 helical membrane-spanning segments follow: residues 11-31, 44-64, 77-97, 117-137, and 148-168; these read VVAI…VVIP, AFLA…TGLI, AWWS…WIGL, GQII…DILI, and QGVI…TILL.

It belongs to the UPF0397 family.

It localises to the cell membrane. The protein is UPF0397 protein SAR2767 of Staphylococcus aureus (strain MRSA252).